Consider the following 574-residue polypeptide: Sulfate adenylyltransferase (574 aa).

Residues Met-1–Tyr-169 are N-terminal. Residues Asp-170–Thr-394 are catalytic. A sulfate-binding site is contributed by Gln-197. ATP-binding positions include Gln-197 to Asn-200 and Gly-291 to His-294. Catalysis depends on residues Thr-198, Arg-199, and Asn-200. Arg-199 lines the sulfate pocket. Residue Ala-295 coordinates sulfate. Residue Val-333 participates in ATP binding. The interval Gln-395–Leu-574 is allosteric regulation domain; adenylyl-sulfate kinase-like. 3'-phosphoadenylyl sulfate contacts are provided by residues Asp-434–Arg-437, Arg-451, Ile-477–Ala-478, and Arg-516.

This sequence in the N-terminal section; belongs to the sulfate adenylyltransferase family. The protein in the C-terminal section; belongs to the APS kinase family. Homohexamer. Dimer of trimers.

The protein localises to the cytoplasm. The catalysed reaction is sulfate + ATP + H(+) = adenosine 5'-phosphosulfate + diphosphate. Its pathway is sulfur metabolism; hydrogen sulfide biosynthesis; sulfite from sulfate: step 1/3. With respect to regulation, allosterically inhibited by 3'-phosphoadenosine 5'-phosphosulfate (PAPS). Catalyzes the first intracellular reaction of sulfate assimilation, forming adenosine-5'-phosphosulfate (APS) from inorganic sulfate and ATP. Plays an important role in sulfate activation as a component of the biosynthesis pathway of sulfur-containing amino acids. In Aspergillus terreus (strain NIH 2624 / FGSC A1156), this protein is Sulfate adenylyltransferase.